Here is a 241-residue protein sequence, read N- to C-terminus: Phosphatidylcholine synthase (241 aa).

The Cytoplasmic segment spans residues M1 to R15. A helical transmembrane segment spans residues A16–A36. Residues A37–R41 lie on the Periplasmic side of the membrane. Residues F42–I62 form a helical membrane-spanning segment. Topologically, residues A63–S76 are cytoplasmic. Residues G77 to L97 form a helical membrane-spanning segment. Residues Y98–S100 are Periplasmic-facing. The helical transmembrane segment at G101 to I121 threads the bilayer. The Cytoplasmic portion of the chain corresponds to Y122–Y133. The helical transmembrane segment at F134 to A154 threads the bilayer. Residues S155–E156 are Periplasmic-facing. Residues V157–L177 form a helical membrane-spanning segment. Residues H178 to P187 lie on the Cytoplasmic side of the membrane. Residues L188 to F208 form a helical membrane-spanning segment. The Periplasmic segment spans residues E209–P211. The helical transmembrane segment at P212 to L232 threads the bilayer. Residues Q233 to A241 are Cytoplasmic-facing.

It belongs to the CDP-alcohol phosphatidyltransferase class-I family. Mn(2+) is required as a cofactor.

It localises to the cell inner membrane. The enzyme catalyses a CDP-1,2-diacyl-sn-glycerol + choline = a 1,2-diacyl-sn-glycero-3-phosphocholine + CMP + H(+). Activated by CDP-diacylglycerol especially in the presence of Triton X-100 (0.1% w/v) at concentrations where micelles are formed. Maximal activation by Triton X-100 at 0.2% w/v, but higher concentrations become inhibitory. Inhibited by EDTA and high concentrations of choline. Condenses choline with CDP-diglyceride to produce phosphatidylcholine and CMP. The protein is Phosphatidylcholine synthase (pcs) of Rhizobium meliloti (strain 1021) (Ensifer meliloti).